Reading from the N-terminus, the 379-residue chain is Lipid-A-disaccharide synthase (379 aa).

The protein belongs to the LpxB family.

The enzyme catalyses a lipid X + a UDP-2-N,3-O-bis[(3R)-3-hydroxyacyl]-alpha-D-glucosamine = a lipid A disaccharide + UDP + H(+). It participates in bacterial outer membrane biogenesis; LPS lipid A biosynthesis. Condensation of UDP-2,3-diacylglucosamine and 2,3-diacylglucosamine-1-phosphate to form lipid A disaccharide, a precursor of lipid A, a phosphorylated glycolipid that anchors the lipopolysaccharide to the outer membrane of the cell. The polypeptide is Lipid-A-disaccharide synthase (Persephonella marina (strain DSM 14350 / EX-H1)).